A 292-amino-acid chain; its full sequence is Bifunctional protein FolD (292 aa).

Residues 166 to 168 (GRS), S191, and I232 contribute to the NADP(+) site.

The protein belongs to the tetrahydrofolate dehydrogenase/cyclohydrolase family. As to quaternary structure, homodimer.

It catalyses the reaction (6R)-5,10-methylene-5,6,7,8-tetrahydrofolate + NADP(+) = (6R)-5,10-methenyltetrahydrofolate + NADPH. It carries out the reaction (6R)-5,10-methenyltetrahydrofolate + H2O = (6R)-10-formyltetrahydrofolate + H(+). Its pathway is one-carbon metabolism; tetrahydrofolate interconversion. Catalyzes the oxidation of 5,10-methylenetetrahydrofolate to 5,10-methenyltetrahydrofolate and then the hydrolysis of 5,10-methenyltetrahydrofolate to 10-formyltetrahydrofolate. The chain is Bifunctional protein FolD from Wolbachia sp. subsp. Drosophila simulans (strain wRi).